The following is a 239-amino-acid chain: tRNA (guanine-N(7)-)-methyltransferase (239 aa).

Residues 1–13 (MEAEVQQGQQSPE) show a composition bias toward polar residues. The segment at 1–30 (MEAEVQQGQQSPEGQLEKRPPSPPWAGIPL) is disordered. Residues D72, E97, N124, and D147 each contribute to the S-adenosyl-L-methionine site. Residue D147 is part of the active site. Positions 151 and 183 each coordinate substrate.

This sequence belongs to the class I-like SAM-binding methyltransferase superfamily. TrmB family.

The enzyme catalyses guanosine(46) in tRNA + S-adenosyl-L-methionine = N(7)-methylguanosine(46) in tRNA + S-adenosyl-L-homocysteine. Its pathway is tRNA modification; N(7)-methylguanine-tRNA biosynthesis. Catalyzes the formation of N(7)-methylguanine at position 46 (m7G46) in tRNA. The protein is tRNA (guanine-N(7)-)-methyltransferase of Synechococcus sp. (strain JA-2-3B'a(2-13)) (Cyanobacteria bacterium Yellowstone B-Prime).